The chain runs to 150 residues: Large ribosomal subunit protein bL9 (150 aa).

It belongs to the bacterial ribosomal protein bL9 family.

Its function is as follows. Binds to the 23S rRNA. This is Large ribosomal subunit protein bL9 from Mycoplasmopsis pulmonis (strain UAB CTIP) (Mycoplasma pulmonis).